A 526-amino-acid polypeptide reads, in one-letter code: Probable feruloyl esterase B (526 aa).

The signal sequence occupies residues methionine 1–alanine 18. 2 disulfide bridges follow: cysteine 27/cysteine 74 and cysteine 62/cysteine 113. Asparagine 137 carries N-linked (GlcNAc...) asparagine glycosylation. Disulfide bonds link cysteine 186-cysteine 441, cysteine 255-cysteine 272, cysteine 281-cysteine 291, and cysteine 503-cysteine 525. Serine 187 (acyl-ester intermediate) is an active-site residue. A glycan (N-linked (GlcNAc...) asparagine) is linked at asparagine 233. 5 residues coordinate Ca(2+): aspartate 256, aspartate 259, alanine 261, aspartate 263, and isoleucine 265. The N-linked (GlcNAc...) asparagine glycan is linked to asparagine 311. Active-site charge relay system residues include aspartate 400 and histidine 440. N-linked (GlcNAc...) asparagine glycosylation is present at asparagine 516.

This sequence belongs to the tannase family.

Its subcellular location is the secreted. It catalyses the reaction feruloyl-polysaccharide + H2O = ferulate + polysaccharide.. Involved in degradation of plant cell walls. Hydrolyzes the feruloyl-arabinose ester bond in arabinoxylans as well as the feruloyl-galactose and feruloyl-arabinose ester bonds in pectin. This chain is Probable feruloyl esterase B (faeB), found in Aspergillus clavatus (strain ATCC 1007 / CBS 513.65 / DSM 816 / NCTC 3887 / NRRL 1 / QM 1276 / 107).